The primary structure comprises 279 residues: Movement protein (279 aa).

Residues 255-279 (SPPFAIGSPSASRNNSFRSQVVNGL) form a disordered region. Over residues 263-279 (PSASRNNSFRSQVVNGL) the composition is skewed to polar residues.

This sequence belongs to the cucumovirus movement protein family.

Its subcellular location is the host cell junction. The protein resides in the host plasmodesma. Functionally, transports viral genome to neighboring plant cells directly through plasmosdesmata, without any budding. The movement protein allows efficient cell to cell propagation, by bypassing the host cell wall barrier. Acts by forming a tubular structure at the host plasmodesmata, enlarging it enough to allow free passage of virion capsids. This Cucumis sativus (Cucumber) protein is Movement protein.